Consider the following 526-residue polypeptide: GMP synthase [glutamine-hydrolyzing] (526 aa).

Residues 8–208 (CILIIDFGSQ…AVDICRCEVT (201 aa)) form the Glutamine amidotransferase type-1 domain. Catalysis depends on Cys85, which acts as the Nucleophile. Catalysis depends on residues His182 and Glu184. Residues 209-401 (WKPVYIVKNI…LGLPLNVVNQ (193 aa)) enclose the GMPS ATP-PPase domain. 236 to 242 (SGGIDSL) lines the ATP pocket.

In terms of assembly, homodimer.

The enzyme catalyses XMP + L-glutamine + ATP + H2O = GMP + L-glutamate + AMP + diphosphate + 2 H(+). The protein operates within purine metabolism; GMP biosynthesis; GMP from XMP (L-Gln route): step 1/1. Functionally, catalyzes the synthesis of GMP from XMP. In Blochmanniella floridana, this protein is GMP synthase [glutamine-hydrolyzing].